The chain runs to 238 residues: CD63 antigen (238 aa).

Topologically, residues 1–11 are cytoplasmic; sequence MAVEGGMKCVK. Residues 12-32 traverse the membrane as a helical segment; sequence FLLYVLLLAFCACAVGLIAIG. Over 33–51 the chain is Extracellular; the sequence is VAVQVVLKQAITHETTAGS. The chain crosses the membrane as a helical span at residues 52–72; sequence LLPVVIIAVGAFLFLVAFVGC. The Cytoplasmic segment spans residues 73–81; it reads CGACKENYC. The helical transmembrane segment at 82-102 threads the bilayer; it reads LMITFAIFLSLIMLVEVAVAI. Residues 103–203 lie on the Extracellular side of the membrane; that stretch reads AGYVFRDQVK…TIAIWLRKNI (101 aa). Asn-116, Asn-130, Asn-150, and Asn-172 each carry an N-linked (GlcNAc...) asparagine glycan. Residues 204-224 form a helical membrane-spanning segment; it reads LLVAAAALGIAFVEVLGIIFS. At 225-238 the chain is on the cytoplasmic side; that stretch reads CCLVKSIRSGYEVM. The short motif at 234–238 is the Lysosomal targeting motif element; sequence GYEVM.

It belongs to the tetraspanin (TM4SF) family. Interacts with TIMP1 and ITGB1 and recruits TIMP1 to ITGB1. Interacts with CD9. Identified in a complex with CD9 and ITGB3. Interacts with PMEL. Interacts with KDR/VEGFR2; identified in a complex with ITGB1 and KDR/VEGFR2 and is required to recruit KDR to ITGB1 complexes. Interacts with SYT7. In terms of processing, palmitoylated at a low, basal level in unstimulated platelets. The level of palmitoylation increases when platelets are activated by thrombin (in vitro). Ubiquitous. Strongly expressed in kidney. Detected in spleen, bone marrow, peripheral blood mononuclear cells and macrophages.

The protein resides in the cell membrane. Its subcellular location is the lysosome membrane. The protein localises to the late endosome membrane. It localises to the endosome. It is found in the multivesicular body. The protein resides in the melanosome. Its subcellular location is the secreted. The protein localises to the extracellular exosome. It localises to the cell surface. Functionally, functions as a cell surface receptor for TIMP1 and plays a role in the activation of cellular signaling cascades. Plays a role in the activation of ITGB1 and integrin signaling, leading to the activation of AKT, FAK/PTK2 and MAP kinases. Promotes cell survival, reorganization of the actin cytoskeleton, cell adhesion, spreading and migration, via its role in the activation of AKT and FAK/PTK2. Plays a role in VEGFA signaling via its role in regulating the internalization of KDR/VEGFR2. Plays a role in intracellular vesicular transport processes, and is required for normal trafficking of the PMEL luminal domain that is essential for the development and maturation of melanocytes. Plays a role in the adhesion of leukocytes onto endothelial cells via its role in the regulation of SELP trafficking. May play a role in mast cell degranulation in response to Ms4a2/FceRI stimulation, but not in mast cell degranulation in response to other stimuli. In Mus musculus (Mouse), this protein is CD63 antigen (Cd63).